Consider the following 311-residue polypeptide: Linearmycin resistance ATP-binding protein LnrL (311 aa).

In terms of domain architecture, ABC transporter spans 2–232 (LQAENIKKAY…LGGDTIIQLT (231 aa)). 34-41 (GPNGAGKS) contacts ATP.

Belongs to the ABC transporter superfamily. As to quaternary structure, the complex is composed of two ATP-binding proteins (LnrL) and two transmembrane proteins (LnrM and LnrN).

Its function is as follows. Required for resistance to linearmycins, a family of antibiotic-specialized metabolites produced by some streptomycetes. Part of the ABC transporter complex LnrLMN that probably facilitates linearmycin removal from the membrane. Responsible for energy coupling to the transport system. Also mediates KinC-dependent biofilm morphology. The protein is Linearmycin resistance ATP-binding protein LnrL of Bacillus subtilis (strain 168).